A 254-amino-acid polypeptide reads, in one-letter code: Pyrroloquinoline-quinone synthase (254 aa).

Belongs to the PqqC family.

It carries out the reaction 6-(2-amino-2-carboxyethyl)-7,8-dioxo-1,2,3,4,7,8-hexahydroquinoline-2,4-dicarboxylate + 3 O2 = pyrroloquinoline quinone + 2 H2O2 + 2 H2O + H(+). It participates in cofactor biosynthesis; pyrroloquinoline quinone biosynthesis. Its function is as follows. Ring cyclization and eight-electron oxidation of 3a-(2-amino-2-carboxyethyl)-4,5-dioxo-4,5,6,7,8,9-hexahydroquinoline-7,9-dicarboxylic-acid to PQQ. The sequence is that of Pyrroloquinoline-quinone synthase from Rhodopseudomonas palustris (strain TIE-1).